A 165-amino-acid chain; its full sequence is UPF0114 protein in repA1-repA2 intergenic region (165 aa).

3 helical membrane-spanning segments follow: residues 10–32, 53–75, and 134–156; these read YASR…LLTL, LVLV…MVMF, and DQIM…MACI.

Belongs to the UPF0114 family.

The protein resides in the cell membrane. In Buchnera aphidicola subsp. Baizongia pistaciae (strain Bp), this protein is UPF0114 protein in repA1-repA2 intergenic region.